A 522-amino-acid polypeptide reads, in one-letter code: Protein tweety homolog 3 (522 aa).

Over 1–43 (MAAAISYTPPWWVNLLHRLPHLNLQWESLNGDFRPEDPDYQQS) the chain is Extracellular. A helical transmembrane segment spans residues 44-64 (LMLLACVALSCLALDLLFLLF). At 65-87 (YSFWFCCRHRKTEENTNADCCCT) the chain is on the cytoplasmic side. A helical membrane pass occupies residues 88-108 (VWCVIVATLVCSAGIAVGFYG). At 109-211 (NGETSDGIHR…VDLFDWYRWL (103 aa)) the chain is on the extracellular side. 2 residues coordinate Ca(2+): Glu111 and Asp114. Residues Asn127 and Asn145 are each glycosylated (N-linked (GlcNAc...) asparagine). The helical transmembrane segment at 212-232 (GYLGLLLFHVFICLLVLFGLI) threads the bilayer. The Cytoplasmic portion of the chain corresponds to 233–238 (RNSKGT). The helical transmembrane segment at 239–259 (LICVCFLGMMALIISWASMGL) threads the bilayer. Over 260-386 (ELAVAVGSSD…LTGFCYDGVE (127 aa)) the chain is Extracellular. Cystine bridges form between Cys271–Cys381 and Cys299–Cys366. A glycan (N-linked (GlcNAc...) asparagine) is linked at Asn351. The helical transmembrane segment at 387-407 (GLIYLVLFSFVTALMFSSIVC) threads the bilayer. Residues 408-522 (SVPHTWQQRR…TNRPETDPVH (115 aa)) are Cytoplasmic-facing. The segment at 483-522 (QNPRCENTPLIGRESPPPSYTSSMRAKYLATNRPETDPVH) is disordered.

Belongs to the tweety family. In terms of assembly, homotetramer; disulfide-linked. Forms cis-homodimers in the presence of Ca(2+).

The protein localises to the cell membrane. It catalyses the reaction chloride(in) = chloride(out). It carries out the reaction L-glutamate(out) = L-glutamate(in). Functionally, may act as a calcium-independent, swelling-dependent volume-regulated anion channel (VRAC-swell) which plays a pivotal role in the process of regulatory volume decrease (RVD) in the brain through the efflux of anions like chloride and organic osmolytes like glutamate. Probable large-conductance Ca(2+)-activated chloride channel. The polypeptide is Protein tweety homolog 3 (ttyh3) (Xenopus laevis (African clawed frog)).